Here is a 175-residue protein sequence, read N- to C-terminus: Crossover junction endodeoxyribonuclease RuvC (175 aa).

Active-site residues include Asp8, Glu68, and Asp140. Mg(2+) is bound by residues Asp8, Glu68, and Asp140.

The protein belongs to the RuvC family. Homodimer which binds Holliday junction (HJ) DNA. The HJ becomes 2-fold symmetrical on binding to RuvC with unstacked arms; it has a different conformation from HJ DNA in complex with RuvA. In the full resolvosome a probable DNA-RuvA(4)-RuvB(12)-RuvC(2) complex forms which resolves the HJ. Mg(2+) serves as cofactor.

The protein localises to the cytoplasm. The enzyme catalyses Endonucleolytic cleavage at a junction such as a reciprocal single-stranded crossover between two homologous DNA duplexes (Holliday junction).. The RuvA-RuvB-RuvC complex processes Holliday junction (HJ) DNA during genetic recombination and DNA repair. Endonuclease that resolves HJ intermediates. Cleaves cruciform DNA by making single-stranded nicks across the HJ at symmetrical positions within the homologous arms, yielding a 5'-phosphate and a 3'-hydroxyl group; requires a central core of homology in the junction. The consensus cleavage sequence is 5'-(A/T)TT(C/G)-3'. Cleavage occurs on the 3'-side of the TT dinucleotide at the point of strand exchange. HJ branch migration catalyzed by RuvA-RuvB allows RuvC to scan DNA until it finds its consensus sequence, where it cleaves and resolves the cruciform DNA. The sequence is that of Crossover junction endodeoxyribonuclease RuvC from Pseudomonas fluorescens (strain Pf0-1).